The primary structure comprises 115 residues: Insulin (115 aa).

Residues 1-22 (MAALWLQSVSLLVLMLVSWSGS) form the signal peptide. Cystine bridges form between cysteine 32–cysteine 101, cysteine 44–cysteine 114, and cysteine 100–cysteine 105. A propeptide spans 56–92 (DVDPLLGFLPAKSGGAAAGGENEVAEFAFKDQMEMMV) (c peptide).

Belongs to the insulin family. In terms of assembly, heterodimer of a B chain and an A chain linked by two disulfide bonds.

It localises to the secreted. In terms of biological role, insulin decreases blood glucose concentration. It increases cell permeability to monosaccharides, amino acids and fatty acids. It accelerates glycolysis, the pentose phosphate cycle, and glycogen synthesis in liver. In Verasper moseri (Barfin flounder), this protein is Insulin (ins).